Here is an 89-residue protein sequence, read N- to C-terminus: Small ribosomal subunit protein uS15 (89 aa).

The tract at residues 1-22 (MPLSKEQKQEVMEKYKLHEHDT) is disordered.

Belongs to the universal ribosomal protein uS15 family. Part of the 30S ribosomal subunit. Forms a bridge to the 50S subunit in the 70S ribosome, contacting the 23S rRNA.

One of the primary rRNA binding proteins, it binds directly to 16S rRNA where it helps nucleate assembly of the platform of the 30S subunit by binding and bridging several RNA helices of the 16S rRNA. Functionally, forms an intersubunit bridge (bridge B4) with the 23S rRNA of the 50S subunit in the ribosome. The chain is Small ribosomal subunit protein uS15 from Natranaerobius thermophilus (strain ATCC BAA-1301 / DSM 18059 / JW/NM-WN-LF).